Here is a 263-residue protein sequence, read N- to C-terminus: Phosphatidylglycerol--prolipoprotein diacylglyceryl transferase (263 aa).

4 consecutive transmembrane segments (helical) span residues 15–35 (ISIH…VYLA), 52–72 (FILL…VIFQ), 83–103 (IFAI…GAAV), and 112–132 (AIAV…AQSI). A 1,2-diacyl-sn-glycero-3-phospho-(1'-sn-glycerol) is bound at residue Arg-134. Transmembrane regions (helical) follow at residues 170–190 (VPTF…ILGL), 200–220 (GDVT…IEGM), and 230–250 (LRVS…LLYF).

The protein belongs to the Lgt family.

It is found in the cell membrane. The enzyme catalyses L-cysteinyl-[prolipoprotein] + a 1,2-diacyl-sn-glycero-3-phospho-(1'-sn-glycerol) = an S-1,2-diacyl-sn-glyceryl-L-cysteinyl-[prolipoprotein] + sn-glycerol 1-phosphate + H(+). It functions in the pathway protein modification; lipoprotein biosynthesis (diacylglyceryl transfer). In terms of biological role, catalyzes the transfer of the diacylglyceryl group from phosphatidylglycerol to the sulfhydryl group of the N-terminal cysteine of a prolipoprotein, the first step in the formation of mature lipoproteins. In Streptococcus thermophilus (strain ATCC BAA-250 / LMG 18311), this protein is Phosphatidylglycerol--prolipoprotein diacylglyceryl transferase.